We begin with the raw amino-acid sequence, 180 residues long: Inner membrane-spanning protein YciB (180 aa).

5 helical membrane-spanning segments follow: residues 25-45 (QNAT…CYII), 49-69 (VSKL…ITLI), 76-96 (IKIK…MSGI), 118-138 (IILS…NEVV), and 150-170 (FKVF…LPLL).

It belongs to the YciB family.

It localises to the cell inner membrane. Plays a role in cell envelope biogenesis, maintenance of cell envelope integrity and membrane homeostasis. The polypeptide is Inner membrane-spanning protein YciB (Rickettsia prowazekii (strain Madrid E)).